A 419-amino-acid polypeptide reads, in one-letter code: MAASSLEQKLSRLEAKLKQENREARRRIDLNLDISPQRPRPTLQLPLANDGGSRSPSSESSPQHPTPPSRPRHMLGLPSTLFTPRSMESIEIDQKLQEIMKQTGYLTIGGQRYQAEINDLENLGEMGSGTCGQVWKMRFRKTGHIIAVKQMRRSGNKEENKRILMDLDVVLKSHDCPYIVQCFGTFITNTDVFIAMELMGTCAEKLKKRMQGPIPERILGKMTVAIVKALYYLKEKHGVIHRDVKPSNILLDERGQIKLCDFGISGRLVDSKAKTRSAGCAAYMAPERIDPPDPTKPDYDIRADVWSLGISLVELATGQFPYKNCKTDFEVLTKVLQEEPPLLPGHMGFSGDFQSFVKDCLTKDHRKRPKYNKLLEHSFIKHYETLEVDVASWFKDVMAKTESPRTSGVLSQHHLPFFR.

N-acetylalanine is present on alanine 2. A coiled-coil region spans residues 2-30; it reads AASSLEQKLSRLEAKLKQENREARRRIDL. Positions 18 to 30 are enriched in basic and acidic residues; the sequence is KQENREARRRIDL. The disordered stretch occupies residues 18–77; it reads KQENREARRRIDLNLDISPQRPRPTLQLPLANDGGSRSPSSESSPQHPTPPSRPRHMLGL. Low complexity predominate over residues 36–63; sequence PQRPRPTLQLPLANDGGSRSPSSESSPQ. The d Domain stretch occupies residues 37–57; that stretch reads QRPRPTLQLPLANDGGSRSPS. The 261-residue stretch at 120 to 380 folds into the Protein kinase domain; sequence LENLGEMGSG…YNKLLEHSFI (261 aa). ATP is bound by residues 126–134 and lysine 149; that span reads MGSGTCGQV. Aspartate 243 (proton acceptor) is an active-site residue. Serine 271 is subject to Phosphoserine; by MAP3K. Threonine 275 bears the Phosphothreonine; by MAP3K mark. Positions 377–400 are DVD domain; it reads HSFIKHYETLEVDVASWFKDVMAK. Serine 411 is subject to Phosphoserine.

It belongs to the protein kinase superfamily. STE Ser/Thr protein kinase family. MAP kinase kinase subfamily. Interacts with VRK2. Interacts (via its D domain) with its substrates MAPK8/JNK1, MAPK9/JNK2 and MAPK10/JNK3. Interacts (via its DVD domain) with MAP3Ks activators like MAP3K5/ASK1 and MAP3K1/MEKK1. Interacts with MAPK8IP1/JIP1, MAPK8IP2/JIP2 and MAPK8IP3/JIP3 scaffold proteins. Interacts with RASSF7, the interaction promotes phosphorylation. Found in a complex with SH3RF1, RAC1, MAP3K11/MLK3, MAPK8IP1/JIP1 and MAPK8/JNK1. Found in a complex with SH3RF1, RAC2, MAP3K7/TAK1, MAPK8IP1/JIP1, MAPK8/JNK1 and MAPK9/JNK2. The cofactor is Mg(2+). Post-translationally, activated by phosphorylation on Ser-271 and Thr-275 by MAP kinase kinase kinases (MAP3Ks).

It is found in the nucleus. The protein localises to the cytoplasm. It catalyses the reaction L-seryl-[protein] + ATP = O-phospho-L-seryl-[protein] + ADP + H(+). It carries out the reaction L-threonyl-[protein] + ATP = O-phospho-L-threonyl-[protein] + ADP + H(+). The catalysed reaction is L-tyrosyl-[protein] + ATP = O-phospho-L-tyrosyl-[protein] + ADP + H(+). With respect to regulation, activated by phosphorylation by specific MAP kinase kinase kinases such as MAP3K1/MEKK1, MAP3K3/MEKK3, MAP3K11/MLK3 and MAP3K12/DLK. Its function is as follows. Dual specificity protein kinase which acts as an essential component of the MAP kinase signal transduction pathway. Essential component of the stress-activated protein kinase/c-Jun N-terminal kinase (SAP/JNK) signaling pathway. With MAP2K4/MKK4, is the one of the only known kinase to directly activate the stress-activated protein kinase/c-Jun N-terminal kinases MAPK8/JNK1, MAPK9/JNK2 and MAPK10/JNK3. MAP2K4/MKK4 and MAP2K7/MKK7 both activate the JNKs by phosphorylation, but they differ in their preference for the phosphorylation site in the Thr-Pro-Tyr motif. MAP2K4/MKK4 shows preference for phosphorylation of the Tyr residue and MAP2K7/MKK7 for the Thr residue. The monophosphorylation of JNKs on the Thr residue is sufficient to increase JNK activity indicating that MAP2K7/MKK7 is important to trigger JNK activity, while the additional phosphorylation of the Tyr residue by MAP2K4/MKK4 ensures optimal JNK activation. Has a specific role in JNK signal transduction pathway activated by pro-inflammatory cytokines. The MKK/JNK signaling pathway is also involved in mitochondrial death signaling pathway, including the release cytochrome c, leading to apoptosis. Part of a non-canonical MAPK signaling pathway, composed of the upstream MAP3K12 kinase and downstream MAP kinases MAPK1/ERK2 and MAPK3/ERK1, that enhances the AP-1-mediated transcription of APP in response to APOE. The polypeptide is Dual specificity mitogen-activated protein kinase kinase 7 (Rattus norvegicus (Rat)).